Reading from the N-terminus, the 125-residue chain is MSGRGKGGKAKGKSKSRSSRAGLQFPVGRIHRLLRKGNYAERIGAGAPVYLAAVMEYLAAEVLELAGNAARDNKKTRIIPRHLQLAIRNDEELNKLLSGVTIAQGGVLPNIQAVLLPKKSSQKTK.

The segment covering 1–18 (MSGRGKGGKAKGKSKSRS) has biased composition (basic residues). Residues 1–23 (MSGRGKGGKAKGKSKSRSSRAGL) form a disordered region. The residue at position 2 (Ser2) is an N-acetylserine. The residue at position 2 (Ser2) is a Phosphoserine. The residue at position 104 (Gln104) is an N5-methylglutamine.

Belongs to the histone H2A family. As to quaternary structure, the nucleosome is a histone octamer containing two molecules each of H2A, H2B, H3 and H4 assembled in one H3-H4 heterotetramer and two H2A-H2B heterodimers. The octamer wraps approximately 147 bp of DNA.

The protein resides in the nucleus. Its subcellular location is the chromosome. Functionally, core component of nucleosome. Nucleosomes wrap and compact DNA into chromatin, limiting DNA accessibility to the cellular machineries which require DNA as a template. Histones thereby play a central role in transcription regulation, DNA repair, DNA replication and chromosomal stability. DNA accessibility is regulated via a complex set of post-translational modifications of histones, also called histone code, and nucleosome remodeling. The chain is Histone H2A from Urechis caupo (Innkeeper worm).